A 602-amino-acid chain; its full sequence is Aspartate--tRNA(Asp/Asn) ligase (602 aa).

E176 is an L-aspartate binding site. Positions 200 to 203 (QQFK) are aspartate. Positions 222 and 452 each coordinate L-aspartate. 222–224 (RDE) lines the ATP pocket. E490 is a binding site for ATP. R497 is an L-aspartate binding site. Residue 542–545 (GIDR) coordinates ATP.

The protein belongs to the class-II aminoacyl-tRNA synthetase family. Type 1 subfamily. In terms of assembly, homodimer.

It is found in the cytoplasm. The catalysed reaction is tRNA(Asx) + L-aspartate + ATP = L-aspartyl-tRNA(Asx) + AMP + diphosphate. Functionally, aspartyl-tRNA synthetase with relaxed tRNA specificity since it is able to aspartylate not only its cognate tRNA(Asp) but also tRNA(Asn). Reaction proceeds in two steps: L-aspartate is first activated by ATP to form Asp-AMP and then transferred to the acceptor end of tRNA(Asp/Asn). The chain is Aspartate--tRNA(Asp/Asn) ligase from Rickettsia bellii (strain OSU 85-389).